The chain runs to 649 residues: Threonine--tRNA ligase (649 aa).

The TGS domain maps to 1-60 (MHVTLPDGKQLDLQAGATALDVARALGPRLAQDALAALVNGELMDLMTPLPEGAQVRLIT). The tract at residues 248–544 (DHRKLGRELE…LIEHYGGDFP (297 aa)) is catalytic. Zn(2+)-binding residues include cysteine 341, histidine 392, and histidine 521.

It belongs to the class-II aminoacyl-tRNA synthetase family. As to quaternary structure, homodimer. It depends on Zn(2+) as a cofactor.

Its subcellular location is the cytoplasm. It carries out the reaction tRNA(Thr) + L-threonine + ATP = L-threonyl-tRNA(Thr) + AMP + diphosphate + H(+). Functionally, catalyzes the attachment of threonine to tRNA(Thr) in a two-step reaction: L-threonine is first activated by ATP to form Thr-AMP and then transferred to the acceptor end of tRNA(Thr). Also edits incorrectly charged L-seryl-tRNA(Thr). This is Threonine--tRNA ligase from Deinococcus geothermalis (strain DSM 11300 / CIP 105573 / AG-3a).